A 155-amino-acid chain; its full sequence is Ribosomal RNA large subunit methyltransferase H (155 aa).

Residues Leu-72, Gly-104, and 123 to 128 (LSKMTF) each bind S-adenosyl-L-methionine.

The protein belongs to the RNA methyltransferase RlmH family. In terms of assembly, homodimer.

The protein resides in the cytoplasm. It carries out the reaction pseudouridine(1915) in 23S rRNA + S-adenosyl-L-methionine = N(3)-methylpseudouridine(1915) in 23S rRNA + S-adenosyl-L-homocysteine + H(+). Its function is as follows. Specifically methylates the pseudouridine at position 1915 (m3Psi1915) in 23S rRNA. This is Ribosomal RNA large subunit methyltransferase H from Cytophaga hutchinsonii (strain ATCC 33406 / DSM 1761 / CIP 103989 / NBRC 15051 / NCIMB 9469 / D465).